The chain runs to 261 residues: Bidirectional sugar transporter SWEET1b (261 aa).

Residues 1-6 (MEDLAK) lie on the Extracellular side of the membrane. Residues 7 to 27 (FLFGVSGNVIALFLFLSPVPT) form a helical membrane-spanning segment. The MtN3/slv 1 domain occupies 7–95 (FLFGVSGNVI…VVFLVFASTH (89 aa)). Residues 28–42 (FWRIIRRKSTEDFSG) lie on the Cytoplasmic side of the membrane. A helical transmembrane segment spans residues 43–63 (VPYNMTLINCLLSAWYGLPFV). Topologically, residues 64-71 (SPNNILVS) are extracellular. The helical transmembrane segment at 72 to 92 (TINGAGAVIETAYVVVFLVFA) threads the bilayer. At 93 to 101 (STHKTRLRT) the chain is on the cytoplasmic side. The helical transmembrane segment at 102-122 (LGLAAAVASVFAAVALVSLLA) threads the bilayer. The Extracellular segment spans residues 123–129 (LHGQHRK). A helical membrane pass occupies residues 130 to 150 (LLCGVAATVCSICMYASPLSI). The MtN3/slv 2 domain occupies 133 to 215 (GVAATVCSIC…VLYAIYRNNK (83 aa)). Residues 151 to 164 (MRLVIKTKSVEYMP) lie on the Cytoplasmic side of the membrane. A helical membrane pass occupies residues 165-185 (FLMSLAVFLCGTSWFIYGLLG). At 186 to 189 (RDPF) the chain is on the extracellular side. The helical transmembrane segment at 190-210 (VTIPNGCGSFLGAVQLVLYAI) threads the bilayer. The Cytoplasmic segment spans residues 211–261 (YRNNKGAGGGSGGKQAGDDDVEMAEGRNNKVADGGAADDDSTAGGKAGTEV). Residues 218 to 261 (GGGSGGKQAGDDDVEMAEGRNNKVADGGAADDDSTAGGKAGTEV) form a disordered region.

This sequence belongs to the SWEET sugar transporter family. In terms of assembly, forms homodimers. As to expression, highly expressed in leaves. Expressed at very low levels in roots, stems and panicles.

The protein resides in the cell membrane. The catalysed reaction is D-glucose(out) = D-glucose(in). The enzyme catalyses D-galactose(in) = D-galactose(out). Mediates transport of sugars across the plasma membrane. Can transport glucose and galactose, but not fructose, mannose and sucrose. In Oryza sativa subsp. japonica (Rice), this protein is Bidirectional sugar transporter SWEET1b (SWEET1B).